Consider the following 92-residue polypeptide: Elongation factor 1-beta (92 aa).

Belongs to the EF-1-beta/EF-1-delta family.

Promotes the exchange of GDP for GTP in EF-1-alpha/GDP, thus allowing the regeneration of EF-1-alpha/GTP that could then be used to form the ternary complex EF-1-alpha/GTP/AAtRNA. This is Elongation factor 1-beta from Korarchaeum cryptofilum (strain OPF8).